The chain runs to 277 residues: Soluble NSF attachment protein 29 (277 aa).

Positions 1–11 are enriched in basic and acidic residues; it reads MSRNPFDDDYR. Disordered regions lie at residues 1–30, 49–73, and 117–170; these read MSRNPFDDDYRPSAASSTMPVKSYTTMGHY, ESLDSTERSRRHLENSEKIGTSTAQ, and KFTK…ESSR. The span at 14 to 28 shows a compositional bias: polar residues; the sequence is AASSTMPVKSYTTMG. A t-SNARE coiled-coil homology 1 domain is found at 44–106; that stretch reads EKTLQESLDS…QMTQRNLNSL (63 aa). The span at 49–65 shows a compositional bias: basic and acidic residues; sequence ESLDSTERSRRHLENSE. The segment covering 134–170 has biased composition (polar residues); that stretch reads SKSASRLSETATNLSSGGGSATFSGPSGQRTLTESSR. Positions 179 to 241 constitute a t-SNARE coiled-coil homology 2 domain; it reads EAMDNQIDEN…RDQDKQMQKI (63 aa).

The protein belongs to the SNAP-25 family.

The protein localises to the synapse. It localises to the synaptosome. Functionally, SNAREs, soluble N-ethylmaleimide-sensitive factor-attachment protein receptors, are essential proteins for fusion of cellular membranes. SNAREs localized on opposing membranes assemble to form a trans-SNARE complex, an extended, parallel four alpha-helical bundle that drives membrane fusion. Plays a role in the processing and secretion of the aspartic protease hrg-7 from the intestine. In Caenorhabditis elegans, this protein is Soluble NSF attachment protein 29.